The following is a 103-amino-acid chain: Small ribosomal subunit protein uS10 (103 aa).

This sequence belongs to the universal ribosomal protein uS10 family. As to quaternary structure, part of the 30S ribosomal subunit.

Involved in the binding of tRNA to the ribosomes. The sequence is that of Small ribosomal subunit protein uS10 from Verminephrobacter eiseniae (strain EF01-2).